A 715-amino-acid chain; its full sequence is Polyribonucleotide nucleotidyltransferase (715 aa).

Asp487 and Asp493 together coordinate Mg(2+). Residues Pro554 to Ile613 form the KH domain. Positions Gly623 to Lys691 constitute an S1 motif domain.

This sequence belongs to the polyribonucleotide nucleotidyltransferase family. Requires Mg(2+) as cofactor.

It is found in the cytoplasm. It catalyses the reaction RNA(n+1) + phosphate = RNA(n) + a ribonucleoside 5'-diphosphate. In terms of biological role, involved in mRNA degradation. Catalyzes the phosphorolysis of single-stranded polyribonucleotides processively in the 3'- to 5'-direction. The sequence is that of Polyribonucleotide nucleotidyltransferase from Dechloromonas aromatica (strain RCB).